The chain runs to 327 residues: tRNA-dihydrouridine(20/20a) synthase (327 aa).

FMN contacts are provided by residues 17–19 (PML) and glutamine 69. Catalysis depends on cysteine 99, which acts as the Proton donor. Residues lysine 138, histidine 170, 210-212 (NGG), and 232-233 (GR) each bind FMN.

This sequence belongs to the Dus family. DusA subfamily. The cofactor is FMN.

It carries out the reaction 5,6-dihydrouridine(20) in tRNA + NADP(+) = uridine(20) in tRNA + NADPH + H(+). The enzyme catalyses 5,6-dihydrouridine(20) in tRNA + NAD(+) = uridine(20) in tRNA + NADH + H(+). The catalysed reaction is 5,6-dihydrouridine(20a) in tRNA + NADP(+) = uridine(20a) in tRNA + NADPH + H(+). It catalyses the reaction 5,6-dihydrouridine(20a) in tRNA + NAD(+) = uridine(20a) in tRNA + NADH + H(+). Catalyzes the synthesis of 5,6-dihydrouridine (D), a modified base found in the D-loop of most tRNAs, via the reduction of the C5-C6 double bond in target uridines. Specifically modifies U20 and U20a in tRNAs. This chain is tRNA-dihydrouridine(20/20a) synthase, found in Pasteurella multocida (strain Pm70).